Consider the following 117-residue polypeptide: MRVKRGLASHRRHKKYLDAAKGFRGGRSKLYRTAREAVERSWMYAFRDRKVKKREFRKLWILRINAGARMHGLSYSKFMHGLTLAGISLNRKVLADLAVREKEDFAKLAQLAASKLN.

This sequence belongs to the bacterial ribosomal protein bL20 family.

Its function is as follows. Binds directly to 23S ribosomal RNA and is necessary for the in vitro assembly process of the 50S ribosomal subunit. It is not involved in the protein synthesizing functions of that subunit. This chain is Large ribosomal subunit protein bL20, found in Nitratidesulfovibrio vulgaris (strain DSM 19637 / Miyazaki F) (Desulfovibrio vulgaris).